Reading from the N-terminus, the 675-residue chain is DNA ligase (675 aa).

NAD(+) is bound by residues 33 to 37, 82 to 83, and glutamate 115; these read DAEYD and SL. Lysine 117 functions as the N6-AMP-lysine intermediate in the catalytic mechanism. NAD(+)-binding residues include arginine 138, glutamate 175, lysine 293, and lysine 317. Positions 411, 414, 429, and 435 each coordinate Zn(2+). In terms of domain architecture, BRCT spans 594–675; that stretch reads IADNPLKDKT…LIGYFTTIVS (82 aa).

The protein belongs to the NAD-dependent DNA ligase family. LigA subfamily. The cofactor is Mg(2+). It depends on Mn(2+) as a cofactor.

It catalyses the reaction NAD(+) + (deoxyribonucleotide)n-3'-hydroxyl + 5'-phospho-(deoxyribonucleotide)m = (deoxyribonucleotide)n+m + AMP + beta-nicotinamide D-nucleotide.. DNA ligase that catalyzes the formation of phosphodiester linkages between 5'-phosphoryl and 3'-hydroxyl groups in double-stranded DNA using NAD as a coenzyme and as the energy source for the reaction. It is essential for DNA replication and repair of damaged DNA. The sequence is that of DNA ligase from Glaesserella parasuis serovar 5 (strain SH0165) (Haemophilus parasuis).